We begin with the raw amino-acid sequence, 297 residues long: Probable endonuclease 4 (297 aa).

H69, H110, E145, D179, H182, H214, D227, H229, and E259 together coordinate Zn(2+).

Belongs to the AP endonuclease 2 family. It depends on Zn(2+) as a cofactor.

It catalyses the reaction Endonucleolytic cleavage to 5'-phosphooligonucleotide end-products.. Its function is as follows. Endonuclease IV plays a role in DNA repair. It cleaves phosphodiester bonds at apurinic or apyrimidinic (AP) sites, generating a 3'-hydroxyl group and a 5'-terminal sugar phosphate. This chain is Probable endonuclease 4, found in Bacillus subtilis (strain 168).